A 632-amino-acid polypeptide reads, in one-letter code: tRNA uridine 5-carboxymethylaminomethyl modification enzyme MnmG (632 aa).

13 to 18 (GGGHAG) contributes to the FAD binding site. Residue 273–287 (GPRYCPSIEDKIHRF) participates in NAD(+) binding.

This sequence belongs to the MnmG family. In terms of assembly, homodimer. Heterotetramer of two MnmE and two MnmG subunits. The cofactor is FAD.

It is found in the cytoplasm. Its function is as follows. NAD-binding protein involved in the addition of a carboxymethylaminomethyl (cmnm) group at the wobble position (U34) of certain tRNAs, forming tRNA-cmnm(5)s(2)U34. The protein is tRNA uridine 5-carboxymethylaminomethyl modification enzyme MnmG of Psychrobacter cryohalolentis (strain ATCC BAA-1226 / DSM 17306 / VKM B-2378 / K5).